The sequence spans 177 residues: B-phycoerythrin beta chain (177 aa).

Residues Cys50 and Cys61 each contribute to the (2R,3E)-phycoerythrobilin site. Asn72 carries the post-translational modification N4-methylasparagine. 2 residues coordinate (2R,3E)-phycoerythrobilin: Cys82 and Cys158.

This sequence belongs to the phycobiliprotein family. In terms of assembly, heterotetramer of one alpha-1, one alpha-2, and two beta chains. Post-translationally, contains three covalently linked bilin chromophores.

It is found in the plastid. The protein localises to the chloroplast thylakoid membrane. Its function is as follows. Light-harvesting photosynthetic bile pigment-protein from the phycobiliprotein complex. The polypeptide is B-phycoerythrin beta chain (cpeB) (Guillardia theta (Cryptophyte)).